Here is a 411-residue protein sequence, read N- to C-terminus: Lissencephaly-1 homolog (411 aa).

Residues glutamine 9–glycine 41 form the LisH domain. The stretch at threonine 56–alanine 83 forms a coiled coil. WD repeat units lie at residues glycine 106–lysine 147, histidine 149–lysine 187, glycine 191–threonine 230, glycine 233–glutamate 272, alanine 275–valine 334, glycine 337–threonine 376, and alanine 379–arginine 411.

It belongs to the WD repeat LIS1/nudF family.

The protein localises to the cytoplasm. It is found in the cytoskeleton. Its subcellular location is the microtubule organizing center. It localises to the centrosome. Its function is as follows. Positively regulates the activity of the minus-end directed microtubule motor protein dynein. May enhance dynein-mediated microtubule sliding by targeting dynein to the microtubule plus end. Required for several dynein- and microtubule-dependent processes. In Glossina morsitans morsitans (Savannah tsetse fly), this protein is Lissencephaly-1 homolog.